Reading from the N-terminus, the 90-residue chain is Accessory gland-specific peptide 26Ab (90 aa).

A signal peptide spans 1-21; sequence MNYFAVICIFSCICLWQFSDA.

As to expression, main cells and secondary cells of the accessory glands of 1 day old virgin males (at protein level). In 5 day old virgin males, only detected in the secondary cells (at protein level). Reappears in the main cells after mating (at protein level). First detected in adult males 3-4 hr after eclosion, levels increase reaching a peak at day 3-5 which is maintained until at least day 10 of adulthood (at protein level). In unmated male adults, levels are maintained for the first 6 days of adulthood and then gradually decrease for at least the next 8 days. No expression in females.

The protein localises to the secreted. It is found in the extracellular space. It localises to the cytoplasm. In terms of biological role, this protein is transferred from male to female during mating and may affect egglaying and behavior after mating. This Drosophila melanogaster (Fruit fly) protein is Accessory gland-specific peptide 26Ab.